A 119-amino-acid chain; its full sequence is Autophagy-related protein 8h (119 aa).

Residue glycine 119 is the site of Phosphatidylethanolamine amidated glycine attachment.

It belongs to the ATG8 family. Interacts with ATG4. Interacts with ATI1. In terms of processing, gly-119 forms then a thioester bond with the 'Cys-558' of ATG7 (E1-like activating enzyme) before being transferred to the 'Cys-258' of ATG3 (the specific E2 conjugating enzyme), in order to be finally amidated with phosphatidylethanolamine. This lipid modification anchors ATG8 to autophagosomes. As to expression, constitutively expressed.

It localises to the cytoplasmic vesicle. The protein localises to the autophagosome membrane. Its subcellular location is the vacuole membrane. It is found in the cytoplasm. The protein resides in the cytoskeleton. Its function is as follows. Ubiquitin-like modifier involved in autophagosomes formation. May mediate the delivery of the autophagosomes to the vacuole via the microtubule cytoskeleton. The sequence is that of Autophagy-related protein 8h (ATG8H) from Arabidopsis thaliana (Mouse-ear cress).